The following is a 162-amino-acid chain: SsrA-binding protein (162 aa).

Positions 140-162 are disordered; the sequence is DKRETAAKRDWSRQKSRLMKDHG.

The protein belongs to the SmpB family.

It localises to the cytoplasm. In terms of biological role, required for rescue of stalled ribosomes mediated by trans-translation. Binds to transfer-messenger RNA (tmRNA), required for stable association of tmRNA with ribosomes. tmRNA and SmpB together mimic tRNA shape, replacing the anticodon stem-loop with SmpB. tmRNA is encoded by the ssrA gene; the 2 termini fold to resemble tRNA(Ala) and it encodes a 'tag peptide', a short internal open reading frame. During trans-translation Ala-aminoacylated tmRNA acts like a tRNA, entering the A-site of stalled ribosomes, displacing the stalled mRNA. The ribosome then switches to translate the ORF on the tmRNA; the nascent peptide is terminated with the 'tag peptide' encoded by the tmRNA and targeted for degradation. The ribosome is freed to recommence translation, which seems to be the essential function of trans-translation. The polypeptide is SsrA-binding protein (Roseobacter denitrificans (strain ATCC 33942 / OCh 114) (Erythrobacter sp. (strain OCh 114))).